The primary structure comprises 388 residues: uncharacterized protein (388 aa).

This is an uncharacterized protein from Klebsiella pneumoniae.